A 385-amino-acid chain; its full sequence is MPHQLFTSESVSEGHPDKIADQISDAVLDAILIQDPKARVACETYVKTGMVIVGGEITTSAWVDIEEITRCTLAEIGYVHSDMGFDAHSCAVLSAIGKQSPDINQGVDRIDPLDQGAGDQGMMFGYATNETDVLMPAPITYSHRLVKRQSEMRKIGQLPWLRPDAKSQITFKYDKGYAVAIDTIVFSTQHEEDVTQKQLEEAVMEEIIKPVIPTQWLSSSTKYFINPTGRFVIGGPMGDCGLTGRKIIVDTYGGMARHGGGAFSGKDPSKVDRSAAYAARYVAKNIVAAGLADRCEIQISYAIGVANPTSIMLETFGTEKITIQKIMSLIHQHFDLRPYGLIKMLDLLKPIYRATAAYGHFGRDVFPWEATDKAELLREQAGLNQ.

His-15 contributes to the ATP binding site. Asp-17 contributes to the Mg(2+) binding site. Glu-43 serves as a coordination point for K(+). L-methionine is bound by residues Glu-56 and Gln-99. The interval 99–109 (QSPDINQGVDR) is flexible loop. ATP contacts are provided by residues 164–166 (DAK), 230–231 (RF), Asp-239, 245–246 (RK), Ala-262, and Lys-266. Asp-239 lines the L-methionine pocket. Lys-270 is an L-methionine binding site.

It belongs to the AdoMet synthase family. Homotetramer; dimer of dimers. Mg(2+) is required as a cofactor. The cofactor is K(+).

Its subcellular location is the cytoplasm. The enzyme catalyses L-methionine + ATP + H2O = S-adenosyl-L-methionine + phosphate + diphosphate. It functions in the pathway amino-acid biosynthesis; S-adenosyl-L-methionine biosynthesis; S-adenosyl-L-methionine from L-methionine: step 1/1. Functionally, catalyzes the formation of S-adenosylmethionine (AdoMet) from methionine and ATP. The overall synthetic reaction is composed of two sequential steps, AdoMet formation and the subsequent tripolyphosphate hydrolysis which occurs prior to release of AdoMet from the enzyme. In Hamiltonella defensa subsp. Acyrthosiphon pisum (strain 5AT), this protein is S-adenosylmethionine synthase.